Here is a 212-residue protein sequence, read N- to C-terminus: Protein-L-isoaspartate O-methyltransferase (212 aa).

Ser-62 is a catalytic residue.

This sequence belongs to the methyltransferase superfamily. L-isoaspartyl/D-aspartyl protein methyltransferase family.

It localises to the cytoplasm. The enzyme catalyses [protein]-L-isoaspartate + S-adenosyl-L-methionine = [protein]-L-isoaspartate alpha-methyl ester + S-adenosyl-L-homocysteine. Its function is as follows. Catalyzes the methyl esterification of L-isoaspartyl residues in peptides and proteins that result from spontaneous decomposition of normal L-aspartyl and L-asparaginyl residues. It plays a role in the repair and/or degradation of damaged proteins. The sequence is that of Protein-L-isoaspartate O-methyltransferase from Pseudoalteromonas translucida (strain TAC 125).